Here is a 76-residue protein sequence, read N- to C-terminus: Serine proteinase inhibitor IA-2 (76 aa).

N-acetylserine is present on serine 1.

It belongs to the protease inhibitor I9 family.

Functionally, specifically inhibits an intracellular serine proteinase (proteinase A). The sequence is that of Serine proteinase inhibitor IA-2 from Pleurotus ostreatus (Oyster mushroom).